The primary structure comprises 84 residues: Mitochondrial import inner membrane translocase subunit Tim9 (84 aa).

Residues 28 to 52 (CFMDCVKDFTTREVKPEETTCSESC) carry the Twin CX3C motif motif. Intrachain disulfides connect cysteine 28–cysteine 52 and cysteine 32–cysteine 48.

The protein belongs to the small Tim family. As to quaternary structure, heterohexamer; composed of 3 copies of TIMM9 and 3 copies of TIMM10/TIM10A, named soluble 70 kDa complex. The complex forms a 6-bladed alpha-propeller structure and associates with the TIMM22 component of the TIM22 complex. Interacts with multi-pass transmembrane proteins in transit.

Its subcellular location is the mitochondrion inner membrane. Functionally, mitochondrial intermembrane chaperone that participates in the import and insertion of multi-pass transmembrane proteins into the mitochondrial inner membrane. May also be required for the transfer of beta-barrel precursors from the TOM complex to the sorting and assembly machinery (SAM complex) of the outer membrane. Acts as a chaperone-like protein that protects the hydrophobic precursors from aggregation and guide them through the mitochondrial intermembrane space. The polypeptide is Mitochondrial import inner membrane translocase subunit Tim9 (timm9) (Danio rerio (Zebrafish)).